We begin with the raw amino-acid sequence, 362 residues long: Patr class I histocompatibility antigen, A-5 alpha chain (362 aa).

An N-terminal signal peptide occupies residues 1–24 (MQVTAPRTVLLLLSAALALTETWA). The tract at residues 25-114 (GSHSMKYFYT…LRGYYNQSEA (90 aa)) is alpha-1. Topologically, residues 25-308 (GSHSMKYFYT…EPSSQSTIPI (284 aa)) are extracellular. The N-linked (GlcNAc...) asparagine glycan is linked to N110. An alpha-2 region spans residues 115–206 (GSHIIQRMYG…ENGKETLQRA (92 aa)). Cystine bridges form between C125-C188 and C227-C283. Positions 207 to 298 (DPPKTHVTHH…GLPKPLTLRW (92 aa)) are alpha-3. The Ig-like C1-type domain occupies 209–295 (PKTHVTHHPI…QHEGLPKPLT (87 aa)). The tract at residues 299–308 (EPSSQSTIPI) is connecting peptide. The chain crosses the membrane as a helical span at residues 309 to 332 (VGIVAGLAVLAVVVIGAVVAAVMC). At 333–362 (RRKSSGGKGGSYSQAASSDSAQGSDVSLTA) the chain is on the cytoplasmic side. The tract at residues 336 to 362 (SSGGKGGSYSQAASSDSAQGSDVSLTA) is disordered. Residue S343 is modified to Phosphoserine. The segment covering 343-362 (SYSQAASSDSAQGSDVSLTA) has biased composition (low complexity). Phosphotyrosine is present on Y344. Residues S345, S349, S350, S352, S356, and S359 each carry the phosphoserine modification.

Belongs to the MHC class I family. Heterodimer of an alpha chain and a beta chain (beta-2-microglobulin).

The protein localises to the membrane. Its function is as follows. Involved in the presentation of foreign antigens to the immune system. The polypeptide is Patr class I histocompatibility antigen, A-5 alpha chain (Pan troglodytes (Chimpanzee)).